Reading from the N-terminus, the 414-residue chain is Putative competence-damage inducible protein (414 aa).

This sequence belongs to the CinA family.

The chain is Putative competence-damage inducible protein from Listeria monocytogenes serovar 1/2a (strain ATCC BAA-679 / EGD-e).